The chain runs to 85 residues: U4-theraphotoxin-Hhn1o (85 aa).

A signal peptide spans 1–22 (MKVTLIAILTCAAVLVLHTTAA). A propeptide spanning residues 23 to 48 (EELEAESQLMEVGMPDTELAAVDEER) is cleaved from the precursor. Cystine bridges form between Cys52–Cys66, Cys56–Cys77, and Cys71–Cys82.

This sequence belongs to the neurotoxin 12 (Hwtx-2) family. 02 (Hwtx-2) subfamily. In terms of tissue distribution, expressed by the venom gland.

It localises to the secreted. In terms of biological role, postsynaptic neurotoxin. The sequence is that of U4-theraphotoxin-Hhn1o from Cyriopagopus hainanus (Chinese bird spider).